Reading from the N-terminus, the 431-residue chain is MVSLEKNDRVMLARQLPLKSVALILAGGRGTRLKDLTNKRAKPAVHFGGKFRIIDFALSNCLNSGIRRIGVITQYQSHTLVQHIQRGWSLFSEEMNEFVDLLPAQQRMKGENWYRGTADAVTQNLDIIRCYKAEYVVILAGDHIYKQDYSRMLIDHVEKGARCTVACMPVPIKEATAFGVMAVDENDKIIDFVEKPANPPAMPGDASKSLASMGIYVFDADYLYELLAADDKDDASSHDFGKDIIPKITREGMAYAHPFPLSCVQSDPQAEPYWRDVGTLEAYWKANLDLASVTPELDMYDQNWPIRTHMESLPPAKFVQDRSGSHGMTLNSLVSGGCIISGSVVVQSVLFPRVRINSFCNIDSAVLLPEVWVGRSCRLRRCVIDRACIIPEGMVIGENAEEDARRFYRSEEGIVLVTREMLRKLQVKQER.

Lys-39 is a binding site for beta-D-fructose 1,6-bisphosphate. 3 residues coordinate AMP: Arg-40, His-46, and Arg-52. Alpha-D-glucose 1-phosphate is bound by residues Tyr-114, Gly-179, 194-195 (EK), and Ser-212. The AMP site is built by Glu-370 and Arg-386. Beta-D-fructose 1,6-bisphosphate-binding positions include 419–423 (REMLR) and 429–431 (QER).

This sequence belongs to the bacterial/plant glucose-1-phosphate adenylyltransferase family. As to quaternary structure, homotetramer.

The enzyme catalyses alpha-D-glucose 1-phosphate + ATP + H(+) = ADP-alpha-D-glucose + diphosphate. Its pathway is glycan biosynthesis; glycogen biosynthesis. Allosterically activated by fructose-1,6-bisphosphate (F16BP) and inhibited by AMP. Functionally, involved in the biosynthesis of ADP-glucose, a building block required for the elongation reactions to produce glycogen. Catalyzes the reaction between ATP and alpha-D-glucose 1-phosphate (G1P) to produce pyrophosphate and ADP-Glc. This Salmonella typhi protein is Glucose-1-phosphate adenylyltransferase.